We begin with the raw amino-acid sequence, 253 residues long: Retinoic acid early-inducible protein 1-beta (253 aa).

An N-terminal signal peptide occupies residues 1–28 (MAKAAVTKRHHFMIQKLLILLSYGYTNG). Residues Cys37 and Cys56 are joined by a disulfide bond. Residues Asn38, Asn70, Asn83, Asn143, and Asn156 are each glycosylated (N-linked (GlcNAc...) asparagine). A disulfide bridge connects residues Cys90 and Cys190. The segment at 198–230 (LKQSKEKPRSTSRSPSITQLTSTSPLPPPSHST) is disordered. The span at 211-221 (SPSITQLTSTS) shows a compositional bias: low complexity. The GPI-anchor amidated serine moiety is linked to residue Ser229. A propeptide spans 230–253 (TSKKGFISVGLIFISLLFAFAFAM) (removed in mature form).

This sequence belongs to the NKG2D ligand family. Post-translationally, glycosylated. Expressed predominantly in embryonic brain.

Its subcellular location is the cell membrane. Functionally, acts as a ligand for KLRK1. This is Retinoic acid early-inducible protein 1-beta (Raet1b) from Mus musculus (Mouse).